A 541-amino-acid polypeptide reads, in one-letter code: Glutamyl-tRNA(Gln) amidotransferase subunit B, mitochondrial (541 aa).

Belongs to the GatB/GatE family. GatB subfamily. Subunit of the heterotrimeric GatFAB amidotransferase (AdT) complex, composed of A, B and F subunits.

Its subcellular location is the mitochondrion. The enzyme catalyses L-glutamyl-tRNA(Gln) + L-glutamine + ATP + H2O = L-glutaminyl-tRNA(Gln) + L-glutamate + ADP + phosphate + H(+). In terms of biological role, allows the formation of correctly charged Gln-tRNA(Gln) through the transamidation of misacylated Glu-tRNA(Gln) in the mitochondria. The reaction takes place in the presence of glutamine and ATP through an activated gamma-phospho-Glu-tRNA(Gln). This is Glutamyl-tRNA(Gln) amidotransferase subunit B, mitochondrial from Saccharomyces cerevisiae (strain RM11-1a) (Baker's yeast).